The sequence spans 946 residues: Inhibin beta chain (946 aa).

2 disordered regions span residues 115–142 (VADR…SSTS) and 174–194 (KSRN…RRRR). The span at 128 to 142 (VSVPTTPNETPSSTS) shows a compositional bias: low complexity. N-linked (GlcNAc...) asparagine glycans are attached at residues Asn208, Asn217, Asn271, and Asn389. The disordered stretch occupies residues 436-462 (SPGSHLFNGRGGRTDQRSERDPSHHKY). Residues 447-459 (GRTDQRSERDPSH) are compositionally biased toward basic and acidic residues. N-linked (GlcNAc...) asparagine glycosylation is found at Asn471, Asn484, Asn542, Asn561, Asn566, Asn732, and Asn804. 4 disulfide bridges follow: Cys837/Cys846, Cys845/Cys912, Cys874/Cys943, and Cys878/Cys945.

The protein belongs to the TGF-beta family. In terms of assembly, homodimer or heterodimer; disulfide-linked. Post-translationally, cleaved in vitro by metalloproteases tok and tld to produce a 30 kDa product. In terms of tissue distribution, widely expressed in larval brains.

Its subcellular location is the secreted. Controls several aspects of neuronal morphogenesis; essential for optic lobe development, EcR-B1 expression in larval brains, mushroom body remodeling, dorsal neuron morphogenesis and motoneuron axon guidance. Ligands Actbeta and daw act redundantly through the Activin receptor Babo and its transcriptional mediator Smad2 (Smox), to regulate neuroblast numbers and proliferation rates in the developing larval brain. The chain is Inhibin beta chain (Actbeta) from Drosophila melanogaster (Fruit fly).